Reading from the N-terminus, the 154-residue chain is Interleukin-2 (154 aa).

The N-terminal stretch at 1-20 (MYKLQFLSCIALTLALVANS) is a signal peptide. O-linked (GalNAc...) threonine glycosylation is present at Thr23. The cysteines at positions 78 and 126 are disulfide-linked. Asn111 carries N-linked (GlcNAc...) asparagine glycosylation.

The protein belongs to the IL-2 family.

Its subcellular location is the secreted. Cytokine produced by activated CD4-positive helper T-cells and to a lesser extend activated CD8-positive T-cells and natural killer (NK) cells that plays pivotal roles in the immune response and tolerance. Binds to a receptor complex composed of either the high-affinity trimeric IL-2R (IL2RA/CD25, IL2RB/CD122 and IL2RG/CD132) or the low-affinity dimeric IL-2R (IL2RB and IL2RG). Interaction with the receptor leads to oligomerization and conformation changes in the IL-2R subunits resulting in downstream signaling starting with phosphorylation of JAK1 and JAK3. In turn, JAK1 and JAK3 phosphorylate the receptor to form a docking site leading to the phosphorylation of several substrates including STAT5. This process leads to activation of several pathways including STAT, phosphoinositide-3-kinase/PI3K and mitogen-activated protein kinase/MAPK pathways. Functions as a T-cell growth factor and can increase NK-cell cytolytic activity as well. Promotes strong proliferation of activated B-cells and subsequently immunoglobulin production. Plays a pivotal role in regulating the adaptive immune system by controlling the survival and proliferation of regulatory T-cells, which are required for the maintenance of immune tolerance. Moreover, participates in the differentiation and homeostasis of effector T-cell subsets, including Th1, Th2, Th17 as well as memory CD8-positive T-cells. The chain is Interleukin-2 (IL2) from Camelus bactrianus (Bactrian camel).